The following is a 61-amino-acid chain: Small ribosomal subunit protein uS14 (61 aa).

Residues Cys24, Cys27, Cys40, and Cys43 each coordinate Zn(2+).

This sequence belongs to the universal ribosomal protein uS14 family. Zinc-binding uS14 subfamily. In terms of assembly, part of the 30S ribosomal subunit. Contacts proteins S3 and S10. It depends on Zn(2+) as a cofactor.

Functionally, binds 16S rRNA, required for the assembly of 30S particles and may also be responsible for determining the conformation of the 16S rRNA at the A site. This chain is Small ribosomal subunit protein uS14, found in Mycoplasmopsis agalactiae (strain NCTC 10123 / CIP 59.7 / PG2) (Mycoplasma agalactiae).